The following is a 168-amino-acid chain: Ubiquitin-conjugating enzyme E2 2 (168 aa).

One can recognise a UBC core domain in the interval 4–150 (PAKRRLMRDF…VRETVENSWN (147 aa)). Residue Cys88 is the Glycyl thioester intermediate of the active site. The segment at 143 to 168 (ETVENSWNEDDEDEDEDEDEDIDDAE) is disordered. Acidic residues predominate over residues 149–168 (WNEDDEDEDEDEDEDIDDAE).

It belongs to the ubiquitin-conjugating enzyme family.

Its subcellular location is the cytoplasm. The protein localises to the nucleus. The catalysed reaction is S-ubiquitinyl-[E1 ubiquitin-activating enzyme]-L-cysteine + [E2 ubiquitin-conjugating enzyme]-L-cysteine = [E1 ubiquitin-activating enzyme]-L-cysteine + S-ubiquitinyl-[E2 ubiquitin-conjugating enzyme]-L-cysteine.. It participates in protein modification; protein ubiquitination. In terms of biological role, catalyzes the covalent attachment of ubiquitin to other proteins. Plays a role in transcription regulation by catalyzing the monoubiquitination of histone H2B to form H2BK123ub1. H2BK123ub1 gives a specific tag for epigenetic transcriptional activation and is also a prerequisite for H3K4me and H3K79me formation. Also involved in postreplication repair of UV-damaged DNA, in N-end rule-dependent protein degradation and in sporulation. This chain is Ubiquitin-conjugating enzyme E2 2 (UBC2), found in Debaryomyces hansenii (strain ATCC 36239 / CBS 767 / BCRC 21394 / JCM 1990 / NBRC 0083 / IGC 2968) (Yeast).